The following is a 161-amino-acid chain: Phosphopantetheine adenylyltransferase (161 aa).

Ser-9 lines the substrate pocket. Residues 9–10 (SF) and His-17 each bind ATP. Substrate is bound by residues Lys-41, Thr-73, and Arg-87. Residues 88–90 (GLR), Glu-98, and 123–129 (FAHISST) each bind ATP.

This sequence belongs to the bacterial CoaD family. Homohexamer. Mg(2+) serves as cofactor.

The protein resides in the cytoplasm. The enzyme catalyses (R)-4'-phosphopantetheine + ATP + H(+) = 3'-dephospho-CoA + diphosphate. The protein operates within cofactor biosynthesis; coenzyme A biosynthesis; CoA from (R)-pantothenate: step 4/5. Its function is as follows. Reversibly transfers an adenylyl group from ATP to 4'-phosphopantetheine, yielding dephospho-CoA (dPCoA) and pyrophosphate. This Chloroflexus aurantiacus (strain ATCC 29366 / DSM 635 / J-10-fl) protein is Phosphopantetheine adenylyltransferase.